Here is a 158-residue protein sequence, read N- to C-terminus: Regenerating islet-derived protein 4 (158 aa).

Positions 1-22 are cleaved as a signal peptide; that stretch reads MASRSMRLLLLLSCLAKTGVLG. A disulfide bridge connects residues Cys30 and Cys41. In terms of domain architecture, C-type lectin spans 37 to 155; sequence HKSNCYGYFR…CNKRQHFLCK (119 aa). N-linked (GlcNAc...) asparagine glycosylation is present at Asn50. 2 disulfides stabilise this stretch: Cys58–Cys154 and Cys129–Cys146. Residues 98 to 103 and 135 to 137 each bind a carbohydrate; these read DPQKRQ and NNN.

In terms of tissue distribution, highly expressed in the gastrointestinal tract including the duodenum, jejunum, ileum, ileocecum, appendix, descending colon, pancreas and small intestine. Weakly expressed in normal colon and stomach. Strongly expressed in most colorectal tumors than in normal colon. Preferentially expressed in mucinous tumors and in some cases neuro-endocrine tumors. Expressed in mucus-secreting cells and enterocyte-like cells. In small intestine expressed at the basal perinuclear zone of goblet cells.

It is found in the secreted. Functionally, calcium-independent lectin displaying mannose-binding specificity and able to maintain carbohydrate recognition activity in an acidic environment. May be involved in inflammatory and metaplastic responses of the gastrointestinal epithelium. The polypeptide is Regenerating islet-derived protein 4 (REG4) (Homo sapiens (Human)).